The following is a 116-amino-acid chain: NADH dehydrogenase [ubiquinone] iron-sulfur protein 6, mitochondrial (116 aa).

The transit peptide at 1–20 (MAAVLTFRRLLTLPRAARGF) directs the protein to the mitochondrion. An N6-acetyllysine mark is found at lysine 90 and lysine 112.

The protein belongs to the complex I NDUFS6 subunit family. In terms of assembly, mammalian complex I is composed of 45 different subunits. This is a component of the iron-sulfur (IP) fragment of the enzyme.

It is found in the mitochondrion inner membrane. Functionally, accessory subunit of the mitochondrial membrane respiratory chain NADH dehydrogenase (Complex I), that is believed not to be involved in catalysis. Complex I functions in the transfer of electrons from NADH to the respiratory chain. The immediate electron acceptor for the enzyme is believed to be ubiquinone. The polypeptide is NADH dehydrogenase [ubiquinone] iron-sulfur protein 6, mitochondrial (Ndufs6) (Mus musculus (Mouse)).